Consider the following 223-residue polypeptide: Fibronectin type III domain-containing protein 10 (223 aa).

The signal sequence occupies residues 1 to 19; sequence MRAPPLLLLLAACAPPSGA. Topologically, residues 20–179 are extracellular; that stretch reads AVDPTPPGWE…FTAEPAAMQE (160 aa). In terms of domain architecture, Fibronectin type-III spans 72–168; that stretch reads LASAGGSLRA…VVPPELAECV (97 aa). N-linked (GlcNAc...) asparagine glycosylation is found at Asn-86 and Asn-109. A helical transmembrane segment spans residues 180–200; sequence IVVAMTAVGGSICVMLVVICL. Residues 201 to 223 lie on the Cytoplasmic side of the membrane; sequence LVAYITENLMHPTFRRPSLRRQP.

It is found in the membrane. This chain is Fibronectin type III domain-containing protein 10 (Fndc10), found in Mus musculus (Mouse).